A 177-amino-acid chain; its full sequence is uncharacterized protein (177 aa).

Residues Met1–Leu175 enclose the Macro domain.

This is an uncharacterized protein from Saccharolobus solfataricus (strain ATCC 35092 / DSM 1617 / JCM 11322 / P2) (Sulfolobus solfataricus).